The chain runs to 533 residues: MEHRSKMEFFQKLGYSQEDVVRVLGKLGDSALVNDVLQELIQTGSRPRAQEDPASGTGVVLIPRGCCGVQDSAQQGPGTRPRRGWRRSSPLLRPIVIDGSNVAMSHGNKEAFSCRGIRLAVDWFTDRGHTYIKVFVPSWRKEPSRSDTPIREQHVLEELERQAVLVYTPSRKVNGKRVVCYDDRYIVKVAYEKDGIIVSNDNYRDLQNENPEWKWFIEQRLLMFSFVNDRFMPPDDPLGRRGPTLSNFLSKKPRPPEPSWQHCPYGKKCTYGVKCRFYHPERPHHGQLSVADELRAKTRAWLGGGAEEPRTPSARSRPTTARLLPQEPGEHDLPPAPQPAVLAALNRSFARLTFSDTAASGVVSQSRGPDWMPTGVPTSWAPPSLRAGSAATIGLPGMRSLRTPNNPLSPGDLGSPICPQARLSERHRSRDMHSDLPPQRRPLEDPWALLPSSYCYLNHSVWSESAWGEDIFRGPSESAQPVANGGGTRPVHCSFFPPDQDHPVMASGPPLSDMALLTLLQRSQKTGAPLGDP.

The RNase NYN domain occupies 92–246 (LRPIVIDGSN…PLGRRGPTLS (155 aa)). The C3H1-type zinc-finger motif lies at 251 to 282 (KKPRPPEPSWQHCPYGKKCTYGVKCRFYHPER). The necessary for interaction with ZC3H12A stretch occupies residues 262–368 (HCPYGKKCTY…ASGVVSQSRG (107 aa)). Positions 302–335 (LGGGAEEPRTPSARSRPTTARLLPQEPGEHDLPP) are disordered.

This sequence belongs to the ZC3H12 family. In terms of assembly, interacts with ZC3H12A. The cofactor is Mg(2+). Expressed at low levels in bone marrow derived macrophages.

The protein resides in the cytoplasm. Its subcellular location is the P-body. Its function is as follows. May regulate cell growth likely by suppressing RB1 phosphorylation. May function as RNase and regulate the levels of target RNA species (Potential). In association with ZC3H12A enhances the degradation of interleukin IL-6 mRNA level in activated macrophages. Serve as a tumor suppressor in certain leukemia cells. Overexpression inhibits the G1 to S phase progression through suppression of RB1 phosphorylation. This chain is Probable ribonuclease ZC3H12D, found in Mus musculus (Mouse).